Here is a 103-residue protein sequence, read N- to C-terminus: Large ribosomal subunit protein uL24 (103 aa).

This sequence belongs to the universal ribosomal protein uL24 family. In terms of assembly, part of the 50S ribosomal subunit.

In terms of biological role, one of two assembly initiator proteins, it binds directly to the 5'-end of the 23S rRNA, where it nucleates assembly of the 50S subunit. Functionally, one of the proteins that surrounds the polypeptide exit tunnel on the outside of the subunit. The polypeptide is Large ribosomal subunit protein uL24 (Haemophilus ducreyi (strain 35000HP / ATCC 700724)).